A 629-amino-acid chain; its full sequence is DNA mismatch repair protein MutL (629 aa).

The protein belongs to the DNA mismatch repair MutL/HexB family.

Its function is as follows. This protein is involved in the repair of mismatches in DNA. It is required for dam-dependent methyl-directed DNA mismatch repair. May act as a 'molecular matchmaker', a protein that promotes the formation of a stable complex between two or more DNA-binding proteins in an ATP-dependent manner without itself being part of a final effector complex. This is DNA mismatch repair protein MutL from Rhodospirillum rubrum (strain ATCC 11170 / ATH 1.1.1 / DSM 467 / LMG 4362 / NCIMB 8255 / S1).